The primary structure comprises 135 residues: Retinol-binding protein 1 (135 aa).

The interval 22–32 (RALDVNVALRK) is important for interaction with STRA6. The all-trans-retinol site is built by Lys-41, Met-63, and Gln-109.

This sequence belongs to the calycin superfamily. Fatty-acid binding protein (FABP) family. Interacts (only as retinol-free apoprotein) with STRA6.

It localises to the cytoplasm. It is found in the lipid droplet. In terms of biological role, cytoplasmic retinol-binding protein. Accepts retinol from the transport protein STRA6, and thereby contributes to retinol uptake, storage and retinoid homeostasis. The protein is Retinol-binding protein 1 (RBP1) of Bos taurus (Bovine).